The sequence spans 376 residues: 1-deoxy-D-xylulose 5-phosphate reductoisomerase (376 aa).

Ser10, Gly11, Ser12, Val13, Gly36, Lys37, Asn38, and Asn118 together coordinate NADPH. Lys119 serves as a coordination point for 1-deoxy-D-xylulose 5-phosphate. Glu120 is an NADPH binding site. Residue Asp144 coordinates Mn(2+). The 1-deoxy-D-xylulose 5-phosphate site is built by Ser145, Glu146, Ser170, and His193. Glu146 provides a ligand contact to Mn(2+). Position 199 (Gly199) interacts with NADPH. The 1-deoxy-D-xylulose 5-phosphate site is built by Ser206, Asn211, Lys212, and Glu215. Glu215 contacts Mn(2+).

This sequence belongs to the DXR family. Requires Mg(2+) as cofactor. Mn(2+) is required as a cofactor.

It carries out the reaction 2-C-methyl-D-erythritol 4-phosphate + NADP(+) = 1-deoxy-D-xylulose 5-phosphate + NADPH + H(+). It functions in the pathway isoprenoid biosynthesis; isopentenyl diphosphate biosynthesis via DXP pathway; isopentenyl diphosphate from 1-deoxy-D-xylulose 5-phosphate: step 1/6. In terms of biological role, catalyzes the NADPH-dependent rearrangement and reduction of 1-deoxy-D-xylulose-5-phosphate (DXP) to 2-C-methyl-D-erythritol 4-phosphate (MEP). In Macrococcus caseolyticus (strain JCSC5402) (Macrococcoides caseolyticum), this protein is 1-deoxy-D-xylulose 5-phosphate reductoisomerase.